The primary structure comprises 340 residues: Tetrathionate reductase subunit C (340 aa).

9 consecutive transmembrane segments (helical) span residues 19 to 39 (WLPW…AALF), 57 to 77 (ALLI…ADLH), 94 to 114 (WMPW…LWFL), 128 to 148 (VTKW…IYTG), 164 to 184 (AFPV…MIVA), 195 to 215 (ILWG…MWVS), 236 to 256 (YYAV…SLAL), 266 to 286 (VLLV…LLIQ), and 306 to 326 (TDGW…LIII).

It belongs to the NrfD family. In terms of assembly, probably composed of three subunits: TtrA, TtrB and TtrC.

It localises to the cell inner membrane. Functionally, part of a membrane-bound tetrathionate reductase that catalyzes the reduction of tetrathionate to thiosulfate. TtrC probably anchors TtrA and TtrB to the periplasmic face of the cytoplasmic membrane. May transfer electrons from membrane quinol to TtrB. During mice infection, the ability to use tetrathionate as an electron acceptor is a growth advantage for S.typhimurium over the competing microbiota in the lumen of the inflamed gut. This chain is Tetrathionate reductase subunit C (ttrC), found in Salmonella typhimurium (strain LT2 / SGSC1412 / ATCC 700720).